The sequence spans 397 residues: Phosphoglycerate kinase (397 aa).

Substrate-binding positions include 23–25, arginine 38, 61–64, arginine 119, and arginine 152; these read DLN and HLGR. Residues lysine 202, glutamate 324, and 354 to 357 each bind ATP; that span reads GGDT.

It belongs to the phosphoglycerate kinase family. Monomer.

It is found in the cytoplasm. It carries out the reaction (2R)-3-phosphoglycerate + ATP = (2R)-3-phospho-glyceroyl phosphate + ADP. It functions in the pathway carbohydrate degradation; glycolysis; pyruvate from D-glyceraldehyde 3-phosphate: step 2/5. This is Phosphoglycerate kinase (pgk) from Xanthobacter flavus.